Reading from the N-terminus, the 176-residue chain is Large ribosomal subunit protein uL10 (176 aa).

It belongs to the universal ribosomal protein uL10 family. Part of the ribosomal stalk of the 50S ribosomal subunit. The N-terminus interacts with L11 and the large rRNA to form the base of the stalk. The C-terminus forms an elongated spine to which L12 dimers bind in a sequential fashion forming a multimeric L10(L12)X complex.

Its function is as follows. Forms part of the ribosomal stalk, playing a central role in the interaction of the ribosome with GTP-bound translation factors. This chain is Large ribosomal subunit protein uL10, found in Nocardia farcinica (strain IFM 10152).